Here is a 442-residue protein sequence, read N- to C-terminus: Serine--tRNA ligase (442 aa).

L-serine is bound at residue 249–251 (TSE). 280–282 (RSE) is a binding site for ATP. L-serine is bound at residue Glu303. 367-370 (EISS) is a binding site for ATP. An L-serine-binding site is contributed by Ser402.

Belongs to the class-II aminoacyl-tRNA synthetase family. Type-1 seryl-tRNA synthetase subfamily. As to quaternary structure, homodimer. The tRNA molecule binds across the dimer.

The protein localises to the cytoplasm. It catalyses the reaction tRNA(Ser) + L-serine + ATP = L-seryl-tRNA(Ser) + AMP + diphosphate + H(+). The catalysed reaction is tRNA(Sec) + L-serine + ATP = L-seryl-tRNA(Sec) + AMP + diphosphate + H(+). Its pathway is aminoacyl-tRNA biosynthesis; selenocysteinyl-tRNA(Sec) biosynthesis; L-seryl-tRNA(Sec) from L-serine and tRNA(Sec): step 1/1. Catalyzes the attachment of serine to tRNA(Ser). Is also able to aminoacylate tRNA(Sec) with serine, to form the misacylated tRNA L-seryl-tRNA(Sec), which will be further converted into selenocysteinyl-tRNA(Sec). In Acidovorax ebreus (strain TPSY) (Diaphorobacter sp. (strain TPSY)), this protein is Serine--tRNA ligase.